Reading from the N-terminus, the 452-residue chain is Gastrin/cholecystokinin type B receptor (452 aa).

Positions 1–21 are disordered; the sequence is MELLKLNRSVQGPGPGSGSSL. Over 1–57 the chain is Extracellular; it reads MELLKLNRSVQGPGPGSGSSLCRPGVSLLNSSSAGNLSCDPPRIRGTGTRELEMAIR. N-linked (GlcNAc...) asparagine glycans are attached at residues Asn-7, Asn-30, and Asn-36. The chain crosses the membrane as a helical span at residues 58–79; it reads ITLYAVIFLMSVGGNVLIIVVL. At 80–87 the chain is on the cytoplasmic side; that stretch reads GLSRRLRT. Residues 88 to 109 form a helical membrane-spanning segment; sequence VTNAFLLSLAVSDLLLAVACMP. Topologically, residues 110-131 are extracellular; the sequence is FTLLPNLMGTFIFGTVICKAIS. A disulfide bond links Cys-127 and Cys-205. The helical transmembrane segment at 132–150 threads the bilayer; that stretch reads YLMGVSVSVSTLNLVAIAL. The Cytoplasmic portion of the chain corresponds to 151–170; the sequence is ERYSAICRPLQARVWQTRSH. A helical transmembrane segment spans residues 171–189; sequence AARVILATWLLSGLLMVPY. Over 190 to 219 the chain is Extracellular; sequence PVYTMVQPVGPRVLQCMHRWPSARVQQTWS. A helical transmembrane segment spans residues 220 to 242; the sequence is VLLLLLLFFIPGVVIAVAYGLIS. At 243-338 the chain is on the cytoplasmic side; that stretch reads RELYLGLHFD…KLLAKKRVVR (96 aa). The tract at residues 257–286 is disordered; it reads SETQSRARNQGGLPGGAAPGPVHQNGGCRP. The helical transmembrane segment at 339–360 threads the bilayer; that stretch reads MLLVIVLLFFLCWLPVYSVNTW. At 361–378 the chain is on the extracellular side; sequence RAFDGPGAQRALSGAPIS. Residues 379–399 form a helical membrane-spanning segment; sequence FIHLLSYVSACVNPLVYCFMH. Over 400 to 452 the chain is Cytoplasmic; sequence RRFRQACLDTCARCCPRPPRARPQPLPDEDPPTPSIASLSRLSYTTISTLGPG. A lipid anchor (S-palmitoyl cysteine) is attached at Cys-413. A disordered region spans residues 421–452; it reads RPQPLPDEDPPTPSIASLSRLSYTTISTLGPG. Polar residues predominate over residues 434–452; the sequence is SIASLSRLSYTTISTLGPG.

It belongs to the G-protein coupled receptor 1 family. In terms of tissue distribution, parietal cells, pancreas, brain and various neoplastic tissues.

The protein localises to the cell membrane. Functionally, receptor for gastrin and cholecystokinin. The CCK-B receptors occur throughout the central nervous system where they modulate anxiety, analgesia, arousal, and neuroleptic activity. This receptor mediates its action by association with G proteins that activate a phosphatidylinositol-calcium second messenger system. This is Gastrin/cholecystokinin type B receptor (Cckbr) from Rattus norvegicus (Rat).